Consider the following 315-residue polypeptide: Methionyl-tRNA formyltransferase (315 aa).

Ser-113–Pro-116 contacts (6S)-5,6,7,8-tetrahydrofolate.

The protein belongs to the Fmt family.

It carries out the reaction L-methionyl-tRNA(fMet) + (6R)-10-formyltetrahydrofolate = N-formyl-L-methionyl-tRNA(fMet) + (6S)-5,6,7,8-tetrahydrofolate + H(+). In terms of biological role, attaches a formyl group to the free amino group of methionyl-tRNA(fMet). The formyl group appears to play a dual role in the initiator identity of N-formylmethionyl-tRNA by promoting its recognition by IF2 and preventing the misappropriation of this tRNA by the elongation apparatus. The protein is Methionyl-tRNA formyltransferase of Escherichia coli O139:H28 (strain E24377A / ETEC).